Reading from the N-terminus, the 614-residue chain is Phragmoplastin DRP1C (614 aa).

A Dynamin-type G domain is found at 32-301 (WEALPTVAVV…LETVIRQKIP (270 aa)). The segment at 42–49 (GGQSSGKS) is G1 motif. 45–50 (SSGKSS) provides a ligand contact to GTP. A G2 motif region spans residues 68-70 (VTR). The interval 143-146 (DLPG) is G3 motif. The interval 212 to 215 (TKLD) is G4 motif. Residues 213–218 (KLDIMD) and 243–246 (NRSQ) each bind GTP. The segment at 242–245 (VNRS) is G5 motif. Residues 499–519 (EPEKEKPNPRNAPAPNADPYS) form a disordered region. Over residues 507 to 517 (PRNAPAPNADP) the composition is skewed to low complexity. The GED domain maps to 523 to 614 (FRKIGSNVSA…RDDIDAVAWK (92 aa)).

The protein belongs to the TRAFAC class dynamin-like GTPase superfamily. Dynamin/Fzo/YdjA family. As to quaternary structure, forms homodimer and may homooligomerize and heterooligomerize to form the phragmoplastin complex. Binds to PHIP1. Ubiquitous.

It localises to the cytoplasm. It is found in the cytoskeleton. The protein localises to the cell cortex. Its subcellular location is the cytoplasmic vesicle. The protein resides in the clathrin-coated vesicle. It localises to the phragmoplast. It carries out the reaction GTP + H2O = GDP + phosphate + H(+). Functionally, microtubule-associated force-producing protein that is targeted to the growing edges of the cell plate during cytokinesis. Also plays a major role in plasma membrane maintenance during pollen maturation. Has a GTPase activity. This chain is Phragmoplastin DRP1C, found in Arabidopsis thaliana (Mouse-ear cress).